A 294-amino-acid polypeptide reads, in one-letter code: 4-hydroxy-tetrahydrodipicolinate synthase (294 aa).

Thr-47 serves as a coordination point for pyruvate. Catalysis depends on Tyr-135, which acts as the Proton donor/acceptor. Lys-163 acts as the Schiff-base intermediate with substrate in catalysis. Ile-206 serves as a coordination point for pyruvate.

The protein belongs to the DapA family. In terms of assembly, homodimer.

It is found in the cytoplasm. The catalysed reaction is L-aspartate 4-semialdehyde + pyruvate = (2S,4S)-4-hydroxy-2,3,4,5-tetrahydrodipicolinate + H2O + H(+). Its pathway is amino-acid biosynthesis; L-lysine biosynthesis via DAP pathway; (S)-tetrahydrodipicolinate from L-aspartate: step 3/4. Functionally, catalyzes the condensation of (S)-aspartate-beta-semialdehyde [(S)-ASA] and pyruvate to 4-hydroxy-tetrahydrodipicolinate (HTPA). The polypeptide is 4-hydroxy-tetrahydrodipicolinate synthase (Staphylococcus haemolyticus (strain JCSC1435)).